A 339-amino-acid polypeptide reads, in one-letter code: DNA-directed RNA polymerase subunit alpha (339 aa).

The interval 1-235 (MVIQKNWQEL…DQLQIFVNFE (235 aa)) is alpha N-terminal domain (alpha-NTD). The interval 251-339 (FNPALLKKVD…DLAKRFEEHY (89 aa)) is alpha C-terminal domain (alpha-CTD).

It belongs to the RNA polymerase alpha chain family. Homodimer. The RNAP catalytic core consists of 2 alpha, 1 beta, 1 beta' and 1 omega subunit. When a sigma factor is associated with the core the holoenzyme is formed, which can initiate transcription.

The enzyme catalyses RNA(n) + a ribonucleoside 5'-triphosphate = RNA(n+1) + diphosphate. Its function is as follows. DNA-dependent RNA polymerase catalyzes the transcription of DNA into RNA using the four ribonucleoside triphosphates as substrates. The sequence is that of DNA-directed RNA polymerase subunit alpha from Methylobacterium nodulans (strain LMG 21967 / CNCM I-2342 / ORS 2060).